A 263-amino-acid polypeptide reads, in one-letter code: Eukaryotic translation initiation factor 3 subunit J-B (263 aa).

Composition is skewed to acidic residues over residues 1-13 (MADS…DNFE) and 30-50 (EGED…EEKE). Disordered regions lie at residues 1-75 (MADS…DKIK) and 214-235 (KQKQ…VPGG). Positions 30 to 127 (EGEDEEEDVK…EADMELAREA (98 aa)) form a coiled coil. A compositionally biased stretch (basic and acidic residues) spans 51-75 (EEKKVEQKIAEVKPPEKKKLSDKIK).

The protein belongs to the eIF-3 subunit J family. In terms of assembly, component of the eukaryotic translation initiation factor 3 (eIF-3) complex, which is composed of 13 subunits: eif3a, eif3b, eif3c, eif3d, eif3e, eif3f, eif3g, eif3h, eif3i, eif3j, eif3k, eif3l and eif3m.

It is found in the cytoplasm. Functionally, component of the eukaryotic translation initiation factor 3 (eIF-3) complex, which is involved in protein synthesis of a specialized repertoire of mRNAs and, together with other initiation factors, stimulates binding of mRNA and methionyl-tRNAi to the 40S ribosome. The eIF-3 complex specifically targets and initiates translation of a subset of mRNAs involved in cell proliferation. The sequence is that of Eukaryotic translation initiation factor 3 subunit J-B (eif3jb) from Danio rerio (Zebrafish).